A 63-amino-acid chain; its full sequence is Large ribosomal subunit protein bL35 (63 aa).

This sequence belongs to the bacterial ribosomal protein bL35 family.

The polypeptide is Large ribosomal subunit protein bL35 (Sulfurimonas denitrificans (strain ATCC 33889 / DSM 1251) (Thiomicrospira denitrificans (strain ATCC 33889 / DSM 1251))).